We begin with the raw amino-acid sequence, 373 residues long: Gametogenetin-binding protein 1 (373 aa).

Disordered stretches follow at residues V26–T113 and K237–E268. The segment covering N36–E49 has biased composition (polar residues). The segment at L226–E373 is required for induction of mitochondrial fragmentation. Residues S254–E263 are compositionally biased toward basic and acidic residues. The tract at residues K301–E373 is interaction with GGN.

Interacts with CCDC159. Interacts with GGN.

It localises to the cytoplasm. It is found in the membrane. Its subcellular location is the golgi apparatus. The protein resides in the mitochondrion intermembrane space. Functionally, induces mitochondrial fragmentation, possibly by promoting DNM1L-dependent fission and may play a role in mitochondrial morphogenesis during spermatogenesis. The polypeptide is Gametogenetin-binding protein 1 (Ggnbp1) (Rattus norvegicus (Rat)).